The primary structure comprises 284 residues: Bifunctional protein FolD (284 aa).

NADP(+) is bound by residues G166–S168 and I232.

Belongs to the tetrahydrofolate dehydrogenase/cyclohydrolase family. As to quaternary structure, homodimer.

The catalysed reaction is (6R)-5,10-methylene-5,6,7,8-tetrahydrofolate + NADP(+) = (6R)-5,10-methenyltetrahydrofolate + NADPH. It carries out the reaction (6R)-5,10-methenyltetrahydrofolate + H2O = (6R)-10-formyltetrahydrofolate + H(+). It participates in one-carbon metabolism; tetrahydrofolate interconversion. Its function is as follows. Catalyzes the oxidation of 5,10-methylenetetrahydrofolate to 5,10-methenyltetrahydrofolate and then the hydrolysis of 5,10-methenyltetrahydrofolate to 10-formyltetrahydrofolate. The polypeptide is Bifunctional protein FolD (Shewanella halifaxensis (strain HAW-EB4)).